The following is a 1408-amino-acid chain: DNA-directed RNA polymerase subunit beta' (1408 aa).

Zn(2+)-binding residues include C70, C72, C85, and C88. Mg(2+) is bound by residues D460, D462, and D464. Zn(2+) is bound by residues C814, C888, C895, and C898.

This sequence belongs to the RNA polymerase beta' chain family. In terms of assembly, the RNAP catalytic core consists of 2 alpha, 1 beta, 1 beta' and 1 omega subunit. When a sigma factor is associated with the core the holoenzyme is formed, which can initiate transcription. Mg(2+) serves as cofactor. Requires Zn(2+) as cofactor.

It catalyses the reaction RNA(n) + a ribonucleoside 5'-triphosphate = RNA(n+1) + diphosphate. Its function is as follows. DNA-dependent RNA polymerase catalyzes the transcription of DNA into RNA using the four ribonucleoside triphosphates as substrates. The protein is DNA-directed RNA polymerase subunit beta' of Baumannia cicadellinicola subsp. Homalodisca coagulata.